We begin with the raw amino-acid sequence, 434 residues long: 3-phosphoshikimate 1-carboxyvinyltransferase (434 aa).

3-phosphoshikimate-binding residues include lysine 15, serine 16, and arginine 20. Lysine 15 contributes to the phosphoenolpyruvate binding site. Residues glycine 96 and arginine 124 each coordinate phosphoenolpyruvate. 3-phosphoshikimate contacts are provided by serine 169, glutamine 171, serine 195, aspartate 319, and lysine 346. Glutamine 171 is a phosphoenolpyruvate binding site. The Proton acceptor role is filled by aspartate 319. 2 residues coordinate phosphoenolpyruvate: arginine 350 and arginine 394.

Belongs to the EPSP synthase family. In terms of assembly, monomer.

Its subcellular location is the cytoplasm. The enzyme catalyses 3-phosphoshikimate + phosphoenolpyruvate = 5-O-(1-carboxyvinyl)-3-phosphoshikimate + phosphate. It participates in metabolic intermediate biosynthesis; chorismate biosynthesis; chorismate from D-erythrose 4-phosphate and phosphoenolpyruvate: step 6/7. Catalyzes the transfer of the enolpyruvyl moiety of phosphoenolpyruvate (PEP) to the 5-hydroxyl of shikimate-3-phosphate (S3P) to produce enolpyruvyl shikimate-3-phosphate and inorganic phosphate. The sequence is that of 3-phosphoshikimate 1-carboxyvinyltransferase from Prosthecochloris aestuarii (strain DSM 271 / SK 413).